The following is a 124-amino-acid chain: Small ribosomal subunit protein uS12 (124 aa).

A disordered region spans residues Met-1–Lys-20. The span at Arg-9–Lys-18 shows a compositional bias: basic residues. Asp-89 carries the 3-methylthioaspartic acid modification.

The protein belongs to the universal ribosomal protein uS12 family. As to quaternary structure, part of the 30S ribosomal subunit. Contacts proteins S8 and S17. May interact with IF1 in the 30S initiation complex.

Functionally, with S4 and S5 plays an important role in translational accuracy. Its function is as follows. Interacts with and stabilizes bases of the 16S rRNA that are involved in tRNA selection in the A site and with the mRNA backbone. Located at the interface of the 30S and 50S subunits, it traverses the body of the 30S subunit contacting proteins on the other side and probably holding the rRNA structure together. The combined cluster of proteins S8, S12 and S17 appears to hold together the shoulder and platform of the 30S subunit. This is Small ribosomal subunit protein uS12 from Clavibacter michiganensis subsp. michiganensis (strain NCPPB 382).